The sequence spans 385 residues: Polyketide synthase 2 (385 aa).

Cys157 is an active-site residue.

This sequence belongs to the thiolase-like superfamily. Chalcone/stilbene synthases family. As to expression, expressed in leaves and glandular trichomes.

It localises to the cytoplasm. In terms of biological role, polyketide synthase responsible for the biosynthesis of secondary metabolites. The chain is Polyketide synthase 2 (PKSG2) from Cannabis sativa (Hemp).